The chain runs to 230 residues: 5'-methylthioadenosine/S-adenosylhomocysteine nucleosidase (230 aa).

The active-site Proton acceptor is the E12. Substrate-binding positions include G78, V152, and 173-174 (ME). Residue D197 is the Proton donor of the active site.

It belongs to the PNP/UDP phosphorylase family. MtnN subfamily.

It carries out the reaction S-adenosyl-L-homocysteine + H2O = S-(5-deoxy-D-ribos-5-yl)-L-homocysteine + adenine. The enzyme catalyses S-methyl-5'-thioadenosine + H2O = 5-(methylsulfanyl)-D-ribose + adenine. The catalysed reaction is 5'-deoxyadenosine + H2O = 5-deoxy-D-ribose + adenine. It participates in amino-acid biosynthesis; L-methionine biosynthesis via salvage pathway; S-methyl-5-thio-alpha-D-ribose 1-phosphate from S-methyl-5'-thioadenosine (hydrolase route): step 1/2. In terms of biological role, catalyzes the irreversible cleavage of the glycosidic bond in both 5'-methylthioadenosine (MTA) and S-adenosylhomocysteine (SAH/AdoHcy) to adenine and the corresponding thioribose, 5'-methylthioribose and S-ribosylhomocysteine, respectively. Also cleaves 5'-deoxyadenosine, a toxic by-product of radical S-adenosylmethionine (SAM) enzymes, into 5-deoxyribose and adenine. This Glaesserella parasuis serovar 5 (strain SH0165) (Haemophilus parasuis) protein is 5'-methylthioadenosine/S-adenosylhomocysteine nucleosidase.